The chain runs to 672 residues: Threonine--tRNA ligase (672 aa).

Residues 2–60 enclose the TGS domain; the sequence is SEPKNILLTVDGELREVTHGTTGLDLFREKPTTAVMRVDGLLWDLAREIPAGASVESVD. The interval 260–567 is catalytic; that stretch reads DHRKLGAELD…LTEHYAGAFP (308 aa). Zn(2+) contacts are provided by C366, H417, and H544.

Belongs to the class-II aminoacyl-tRNA synthetase family. In terms of assembly, homodimer. Zn(2+) serves as cofactor.

It localises to the cytoplasm. It carries out the reaction tRNA(Thr) + L-threonine + ATP = L-threonyl-tRNA(Thr) + AMP + diphosphate + H(+). Functionally, catalyzes the attachment of threonine to tRNA(Thr) in a two-step reaction: L-threonine is first activated by ATP to form Thr-AMP and then transferred to the acceptor end of tRNA(Thr). Also edits incorrectly charged L-seryl-tRNA(Thr). This chain is Threonine--tRNA ligase, found in Micrococcus luteus (strain ATCC 4698 / DSM 20030 / JCM 1464 / CCM 169 / CCUG 5858 / IAM 1056 / NBRC 3333 / NCIMB 9278 / NCTC 2665 / VKM Ac-2230) (Micrococcus lysodeikticus).